The chain runs to 69 residues: Large ribosomal subunit protein bL31 (69 aa).

Zn(2+) is bound by residues Cys-16, Cys-18, Cys-37, and Cys-40.

The protein belongs to the bacterial ribosomal protein bL31 family. Type A subfamily. In terms of assembly, part of the 50S ribosomal subunit. It depends on Zn(2+) as a cofactor.

Functionally, binds the 23S rRNA. This chain is Large ribosomal subunit protein bL31, found in Teredinibacter turnerae (strain ATCC 39867 / T7901).